Here is a 623-residue protein sequence, read N- to C-terminus: Bifunctional enzyme CysN/CysC (623 aa).

The segment at 1–450 (MQSVIAYLKQ…HVARARIKGQ (450 aa)) is sulfate adenylyltransferase. The tr-type G domain occupies 14–228 (KPLLRFITCG…YLEALEPADV (215 aa)). Positions 23 to 30 (GSVDDGKS) are G1. 23–30 (GSVDDGKS) lines the GTP pocket. Residues 81–85 (GITID) are G2. The tract at residues 102–105 (DCPG) is G3. Residues 102 to 106 (DCPGH) and 157 to 160 (NKMD) contribute to the GTP site. Residues 157–160 (NKMD) are G4. The segment at 194-196 (SAL) is G5. The adenylyl-sulfate kinase stretch occupies residues 451-623 (TPKVLWFTGL…VLSLLGVEGK (173 aa)). Residue 459–466 (GLSGAGKS) participates in ATP binding. Catalysis depends on serine 533, which acts as the Phosphoserine intermediate.

It in the C-terminal section; belongs to the APS kinase family. In the N-terminal section; belongs to the TRAFAC class translation factor GTPase superfamily. Classic translation factor GTPase family. CysN/NodQ subfamily. Heterodimer composed of CysD, the smaller subunit, and CysNC.

It catalyses the reaction sulfate + ATP + H(+) = adenosine 5'-phosphosulfate + diphosphate. The enzyme catalyses adenosine 5'-phosphosulfate + ATP = 3'-phosphoadenylyl sulfate + ADP + H(+). The protein operates within sulfur metabolism; hydrogen sulfide biosynthesis; sulfite from sulfate: step 1/3. It functions in the pathway sulfur metabolism; hydrogen sulfide biosynthesis; sulfite from sulfate: step 2/3. In terms of biological role, with CysD forms the ATP sulfurylase (ATPS) that catalyzes the adenylation of sulfate producing adenosine 5'-phosphosulfate (APS) and diphosphate, the first enzymatic step in sulfur assimilation pathway. APS synthesis involves the formation of a high-energy phosphoric-sulfuric acid anhydride bond driven by GTP hydrolysis by CysN coupled to ATP hydrolysis by CysD. APS kinase catalyzes the synthesis of activated sulfate. The sequence is that of Bifunctional enzyme CysN/CysC (cysNC) from Xylella fastidiosa (strain Temecula1 / ATCC 700964).